We begin with the raw amino-acid sequence, 540 residues long: DM7 family protein GD24576 (540 aa).

Residues 416-443 (ATDTRGRDEIRTSCDQSQEKDEGSAEAD) form a disordered region. The span at 417 to 443 (TDTRGRDEIRTSCDQSQEKDEGSAEAD) shows a compositional bias: basic and acidic residues.

The protein belongs to the DM7 family.

The chain is DM7 family protein GD24576 from Drosophila simulans (Fruit fly).